A 184-amino-acid chain; its full sequence is ATP synthase subunit b, chloroplastic (184 aa).

The helical transmembrane segment at 31–49 (IINSSVVLSVLIYFGKGVL) threads the bilayer.

It belongs to the ATPase B chain family. F-type ATPases have 2 components, F(1) - the catalytic core - and F(0) - the membrane proton channel. F(1) has five subunits: alpha(3), beta(3), gamma(1), delta(1), epsilon(1). F(0) has four main subunits: a(1), b(1), b'(1) and c(10-14). The alpha and beta chains form an alternating ring which encloses part of the gamma chain. F(1) is attached to F(0) by a central stalk formed by the gamma and epsilon chains, while a peripheral stalk is formed by the delta, b and b' chains.

It is found in the plastid. The protein resides in the chloroplast thylakoid membrane. Its function is as follows. F(1)F(0) ATP synthase produces ATP from ADP in the presence of a proton or sodium gradient. F-type ATPases consist of two structural domains, F(1) containing the extramembraneous catalytic core and F(0) containing the membrane proton channel, linked together by a central stalk and a peripheral stalk. During catalysis, ATP synthesis in the catalytic domain of F(1) is coupled via a rotary mechanism of the central stalk subunits to proton translocation. Functionally, component of the F(0) channel, it forms part of the peripheral stalk, linking F(1) to F(0). In Pinus thunbergii (Japanese black pine), this protein is ATP synthase subunit b, chloroplastic.